The sequence spans 265 residues: NAD kinase (265 aa).

Catalysis depends on Asp45, which acts as the Proton acceptor. Residues 45–46 (DG), 121–122 (NE), Arg147, Asp149, Ala184, and Gln221 contribute to the NAD(+) site.

This sequence belongs to the NAD kinase family. It depends on a divalent metal cation as a cofactor.

The protein localises to the cytoplasm. The enzyme catalyses NAD(+) + ATP = ADP + NADP(+) + H(+). Involved in the regulation of the intracellular balance of NAD and NADP, and is a key enzyme in the biosynthesis of NADP. Catalyzes specifically the phosphorylation on 2'-hydroxyl of the adenosine moiety of NAD to yield NADP. The chain is NAD kinase from Leuconostoc citreum (strain KM20).